The sequence spans 198 residues: FMN-dependent NADH:quinone oxidoreductase (198 aa).

Residue 92–95 (MWNL) coordinates FMN.

The protein belongs to the azoreductase type 1 family. Homodimer. Requires FMN as cofactor.

It carries out the reaction 2 a quinone + NADH + H(+) = 2 a 1,4-benzosemiquinone + NAD(+). The enzyme catalyses N,N-dimethyl-1,4-phenylenediamine + anthranilate + 2 NAD(+) = 2-(4-dimethylaminophenyl)diazenylbenzoate + 2 NADH + 2 H(+). In terms of biological role, quinone reductase that provides resistance to thiol-specific stress caused by electrophilic quinones. Functionally, also exhibits azoreductase activity. Catalyzes the reductive cleavage of the azo bond in aromatic azo compounds to the corresponding amines. This Clostridium beijerinckii (strain ATCC 51743 / NCIMB 8052) (Clostridium acetobutylicum) protein is FMN-dependent NADH:quinone oxidoreductase.